The chain runs to 344 residues: tRNA N6-adenosine threonylcarbamoyltransferase (344 aa).

The Fe cation site is built by H112 and H116. Residues 134–138 (LASGG), D167, G180, and N280 each bind substrate. Residue D308 coordinates Fe cation.

The protein belongs to the KAE1 / TsaD family. Fe(2+) serves as cofactor.

The protein resides in the cytoplasm. The enzyme catalyses L-threonylcarbamoyladenylate + adenosine(37) in tRNA = N(6)-L-threonylcarbamoyladenosine(37) in tRNA + AMP + H(+). In terms of biological role, required for the formation of a threonylcarbamoyl group on adenosine at position 37 (t(6)A37) in tRNAs that read codons beginning with adenine. Is involved in the transfer of the threonylcarbamoyl moiety of threonylcarbamoyl-AMP (TC-AMP) to the N6 group of A37, together with TsaE and TsaB. TsaD likely plays a direct catalytic role in this reaction. This is tRNA N6-adenosine threonylcarbamoyltransferase from Rickettsia peacockii (strain Rustic).